A 621-amino-acid chain; its full sequence is 1-deoxy-D-xylulose-5-phosphate synthase (621 aa).

Thiamine diphosphate-binding positions include His-80 and 121–123; that span reads GHS. Asp-152 provides a ligand contact to Mg(2+). Thiamine diphosphate-binding positions include 153 to 154, Asn-181, Tyr-288, and Glu-370; that span reads GA. Residue Asn-181 participates in Mg(2+) binding.

The protein belongs to the transketolase family. DXPS subfamily. In terms of assembly, homodimer. Requires Mg(2+) as cofactor. Thiamine diphosphate serves as cofactor.

The catalysed reaction is D-glyceraldehyde 3-phosphate + pyruvate + H(+) = 1-deoxy-D-xylulose 5-phosphate + CO2. The protein operates within metabolic intermediate biosynthesis; 1-deoxy-D-xylulose 5-phosphate biosynthesis; 1-deoxy-D-xylulose 5-phosphate from D-glyceraldehyde 3-phosphate and pyruvate: step 1/1. Catalyzes the acyloin condensation reaction between C atoms 2 and 3 of pyruvate and glyceraldehyde 3-phosphate to yield 1-deoxy-D-xylulose-5-phosphate (DXP). The polypeptide is 1-deoxy-D-xylulose-5-phosphate synthase (Shewanella frigidimarina (strain NCIMB 400)).